The primary structure comprises 395 residues: 1-deoxy-D-xylulose 5-phosphate reductoisomerase (395 aa).

The NADPH site is built by Thr-13, Gly-14, Ser-15, Ile-16, Lys-40, and Asn-127. Lys-128 lines the 1-deoxy-D-xylulose 5-phosphate pocket. Glu-129 lines the NADPH pocket. Asp-153 contacts Mn(2+). Ser-154, Glu-155, Ser-184, and His-207 together coordinate 1-deoxy-D-xylulose 5-phosphate. Glu-155 is a binding site for Mn(2+). Residue Gly-213 participates in NADPH binding. Positions 220, 225, 226, and 229 each coordinate 1-deoxy-D-xylulose 5-phosphate. A Mn(2+)-binding site is contributed by Glu-229.

Belongs to the DXR family. Mg(2+) serves as cofactor. Requires Mn(2+) as cofactor.

The enzyme catalyses 2-C-methyl-D-erythritol 4-phosphate + NADP(+) = 1-deoxy-D-xylulose 5-phosphate + NADPH + H(+). The protein operates within isoprenoid biosynthesis; isopentenyl diphosphate biosynthesis via DXP pathway; isopentenyl diphosphate from 1-deoxy-D-xylulose 5-phosphate: step 1/6. Catalyzes the NADPH-dependent rearrangement and reduction of 1-deoxy-D-xylulose-5-phosphate (DXP) to 2-C-methyl-D-erythritol 4-phosphate (MEP). This Nitrosospira multiformis (strain ATCC 25196 / NCIMB 11849 / C 71) protein is 1-deoxy-D-xylulose 5-phosphate reductoisomerase.